The primary structure comprises 308 residues: Aspartate carbamoyltransferase catalytic subunit (308 aa).

Carbamoyl phosphate is bound by residues arginine 50 and threonine 51. L-aspartate is bound at residue lysine 78. Carbamoyl phosphate is bound by residues arginine 100, histidine 131, and glutamine 134. 2 residues coordinate L-aspartate: arginine 164 and arginine 216. Carbamoyl phosphate contacts are provided by alanine 259 and proline 260.

This sequence belongs to the aspartate/ornithine carbamoyltransferase superfamily. ATCase family. As to quaternary structure, heterododecamer (2C3:3R2) of six catalytic PyrB chains organized as two trimers (C3), and six regulatory PyrI chains organized as three dimers (R2).

The catalysed reaction is carbamoyl phosphate + L-aspartate = N-carbamoyl-L-aspartate + phosphate + H(+). The protein operates within pyrimidine metabolism; UMP biosynthesis via de novo pathway; (S)-dihydroorotate from bicarbonate: step 2/3. Catalyzes the condensation of carbamoyl phosphate and aspartate to form carbamoyl aspartate and inorganic phosphate, the committed step in the de novo pyrimidine nucleotide biosynthesis pathway. This is Aspartate carbamoyltransferase catalytic subunit from Oenococcus oeni (strain ATCC BAA-331 / PSU-1).